Consider the following 315-residue polypeptide: Ribonuclease HII (315 aa).

Positions 78-267 (TLVAGVDEAG…VREALGLAPL (190 aa)) constitute an RNase H type-2 domain. A divalent metal cation-binding residues include D84, E85, and D176. Residues 273 to 292 (APPPESAAEPGGEGAIAGIA) are disordered. Residues 278–292 (SAAEPGGEGAIAGIA) show a composition bias toward low complexity.

Belongs to the RNase HII family. Mn(2+) is required as a cofactor. It depends on Mg(2+) as a cofactor.

The protein resides in the cytoplasm. It catalyses the reaction Endonucleolytic cleavage to 5'-phosphomonoester.. Its function is as follows. Endonuclease that specifically degrades the RNA of RNA-DNA hybrids. The chain is Ribonuclease HII from Anaeromyxobacter sp. (strain Fw109-5).